Reading from the N-terminus, the 285-residue chain is Sulfotransferase 2A2 (285 aa).

K44, S45, G46, T47, N48, and W49 together coordinate 3'-phosphoadenylyl sulfate. H99 functions as the Proton acceptor in the catalytic mechanism. Residues R121, S129, Y184, S218, R247, K248, and G249 each contribute to the 3'-phosphoadenylyl sulfate site.

The protein belongs to the sulfotransferase 1 family. In terms of tissue distribution, detected in liver.

It is found in the cytoplasm. The catalysed reaction is an alcohol + 3'-phosphoadenylyl sulfate = an alkyl sulfate + adenosine 3',5'-bisphosphate + H(+). Functionally, sulfotransferase that utilizes 3'-phospho-5'-adenylyl sulfate (PAPS) as sulfonate donor to catalyze the sulfate conjugation of a potential wide variety of acceptor molecules bearing a hydroxyl group. Sulfonation increases the water solubility of most compounds, and therefore their renal excretion, but it can also result in bioactivation to form active metabolites. This chain is Sulfotransferase 2A2, found in Rattus norvegicus (Rat).